Here is a 252-residue protein sequence, read N- to C-terminus: Triosephosphate isomerase (252 aa).

8–10 (NWK) is a substrate binding site. The Electrophile role is filled by H95. The active-site Proton acceptor is the E167. Substrate contacts are provided by residues G173, S212, and 233–234 (GG).

It belongs to the triosephosphate isomerase family. As to quaternary structure, homodimer.

It is found in the cytoplasm. The catalysed reaction is D-glyceraldehyde 3-phosphate = dihydroxyacetone phosphate. The protein operates within carbohydrate biosynthesis; gluconeogenesis. It participates in carbohydrate degradation; glycolysis; D-glyceraldehyde 3-phosphate from glycerone phosphate: step 1/1. Involved in the gluconeogenesis. Catalyzes stereospecifically the conversion of dihydroxyacetone phosphate (DHAP) to D-glyceraldehyde-3-phosphate (G3P). The sequence is that of Triosephosphate isomerase from Lawsonia intracellularis (strain PHE/MN1-00).